Reading from the N-terminus, the 318-residue chain is MCRAPMPSTVSEISRIYHQPLPDLLFEAQRVHRAHHDPREVQLCTLSNIKTGLCPENCGYCSQSVHHKSGLAAQELSSLDAVMAEAQAAKAAGSTRFCMGAAWREIKDGPPFERVLEMVRSVAALDMEVCCTLGMVKPHQAERLKQAGLTAYNHNLDTGPGYYPQVVTTRTYKDRLETIRAVGAAGISVCCGGILGMGESLTDRFELLESLGSLDPTPESIPINCLVPVAGTPLADSSPVEPLDLVRMVATTRILFPDAMVRLSAGRLQMSEELQALCFLAGANSIFTGPKLLTTPNPEHSHDQKLLEKLGMEPKTTQ.

Residues 36–258 (HDPREVQLCT…VATTRILFPD (223 aa)) form the Radical SAM core domain. The [4Fe-4S] cluster site is built by C54, C58, and C61. Residues C98, C130, C190, and R262 each coordinate [2Fe-2S] cluster.

The protein belongs to the radical SAM superfamily. Biotin synthase family. Homodimer. [4Fe-4S] cluster is required as a cofactor. [2Fe-2S] cluster serves as cofactor.

The catalysed reaction is (4R,5S)-dethiobiotin + (sulfur carrier)-SH + 2 reduced [2Fe-2S]-[ferredoxin] + 2 S-adenosyl-L-methionine = (sulfur carrier)-H + biotin + 2 5'-deoxyadenosine + 2 L-methionine + 2 oxidized [2Fe-2S]-[ferredoxin]. It functions in the pathway cofactor biosynthesis; biotin biosynthesis; biotin from 7,8-diaminononanoate: step 2/2. In terms of biological role, catalyzes the conversion of dethiobiotin (DTB) to biotin by the insertion of a sulfur atom into dethiobiotin via a radical-based mechanism. This chain is Biotin synthase, found in Gloeobacter violaceus (strain ATCC 29082 / PCC 7421).